The chain runs to 64 residues: Large ribosomal subunit protein bL28 (64 aa).

Residues 1–23 form a disordered region; the sequence is MARKDQISHRGPLSGNNRSHALN.

It belongs to the bacterial ribosomal protein bL28 family.

The sequence is that of Large ribosomal subunit protein bL28 from Mesomycoplasma hyopneumoniae (strain J / ATCC 25934 / NCTC 10110) (Mycoplasma hyopneumoniae).